Here is a 146-residue protein sequence, read N- to C-terminus: Phosphoribosyl-AMP cyclohydrolase (146 aa).

Asp-95 is a binding site for Mg(2+). Residue Cys-96 coordinates Zn(2+). Mg(2+)-binding residues include Asp-97 and Asp-99. Positions 112 and 119 each coordinate Zn(2+).

The protein belongs to the PRA-CH family. As to quaternary structure, homodimer. Requires Mg(2+) as cofactor. Zn(2+) is required as a cofactor.

It is found in the cytoplasm. It carries out the reaction 1-(5-phospho-beta-D-ribosyl)-5'-AMP + H2O = 1-(5-phospho-beta-D-ribosyl)-5-[(5-phospho-beta-D-ribosylamino)methylideneamino]imidazole-4-carboxamide. It participates in amino-acid biosynthesis; L-histidine biosynthesis; L-histidine from 5-phospho-alpha-D-ribose 1-diphosphate: step 3/9. Functionally, catalyzes the hydrolysis of the adenine ring of phosphoribosyl-AMP. The polypeptide is Phosphoribosyl-AMP cyclohydrolase (Chromohalobacter salexigens (strain ATCC BAA-138 / DSM 3043 / CIP 106854 / NCIMB 13768 / 1H11)).